A 274-amino-acid polypeptide reads, in one-letter code: D-aminopeptidase (274 aa).

Zn(2+) contacts are provided by Asp-8, Glu-10, His-60, and His-104. His-115 (nucleophile) is an active-site residue. Glu-133 is a binding site for Zn(2+).

It belongs to the peptidase M55 family. Homodecamer. A 20 Angstroms wide channel runs through the complex, giving access to a central chamber holding the active sites. Requires Zn(2+) as cofactor.

Functionally, hydrolyzes N-terminal residues in D-amino acid containing peptides. Among the tested substrates, the highest activities are with D-Ala-D-Ala and D-Ala-Gly-Gly. The physiological role is not clear. In Bacillus subtilis (strain 168), this protein is D-aminopeptidase (dppA).